Reading from the N-terminus, the 195-residue chain is Pyridoxal 5'-phosphate synthase subunit PdxT (195 aa).

Position 53–55 (Gly53–Ser55) interacts with L-glutamine. Cys82 acts as the Nucleophile in catalysis. L-glutamine contacts are provided by residues Arg108 and Ile134–Arg135. Catalysis depends on charge relay system residues His173 and Glu175.

The protein belongs to the glutaminase PdxT/SNO family. As to quaternary structure, in the presence of PdxS, forms a dodecamer of heterodimers. Only shows activity in the heterodimer.

It catalyses the reaction aldehydo-D-ribose 5-phosphate + D-glyceraldehyde 3-phosphate + L-glutamine = pyridoxal 5'-phosphate + L-glutamate + phosphate + 3 H2O + H(+). It carries out the reaction L-glutamine + H2O = L-glutamate + NH4(+). Its pathway is cofactor biosynthesis; pyridoxal 5'-phosphate biosynthesis. Its function is as follows. Catalyzes the hydrolysis of glutamine to glutamate and ammonia as part of the biosynthesis of pyridoxal 5'-phosphate. The resulting ammonia molecule is channeled to the active site of PdxS. This chain is Pyridoxal 5'-phosphate synthase subunit PdxT, found in Methanobrevibacter smithii (strain ATCC 35061 / DSM 861 / OCM 144 / PS).